The primary structure comprises 561 residues: Putative transport protein YbjL (561 aa).

The next 5 helical transmembrane spans lie at 8–28, 32–52, 66–86, 94–114, and 158–178; these read LLNG…LCLG, LGSI…LLGQ, FMLF…SIFF, MLAL…GKLF, and NLSL…IVGA. 2 RCK C-terminal domains span residues 200–288 and 292–373; these read RGLD…SFRN and VFDR…RIGF. 5 consecutive transmembrane segments (helical) span residues 383–403, 406–426, 451–471, 475–495, and 540–560; these read LLAF…TFQF, FSFG…LGFM, VFMA…LGAI, MLIA…LFGA, and AIAN…WPGL.

It belongs to the AAE transporter (TC 2.A.81) family. YbjL subfamily.

The protein localises to the cell membrane. The sequence is that of Putative transport protein YbjL from Escherichia coli O139:H28 (strain E24377A / ETEC).